An 876-amino-acid chain; its full sequence is Probable DNA-directed RNA polymerase catalytic subunit (876 aa).

It belongs to the RNA polymerase beta chain family. Interacts with LEF-4, LEF-9, and p47.

It carries out the reaction RNA(n) + a ribonucleoside 5'-triphosphate = RNA(n+1) + diphosphate. Component of the viral DNA-dependent RNA polymerase which is composed of four equimolar subunits of LEF-4, LEF-8, LEF-9, and p47. Plays an essential role in late and very late gene expression. The sequence is that of Probable DNA-directed RNA polymerase catalytic subunit (LEF-8) from Autographa californica nuclear polyhedrosis virus (AcMNPV).